We begin with the raw amino-acid sequence, 131 residues long: Chorion class high-cysteine HCB protein 12 (131 aa).

Residues 1–21 (MAAKLIVFVCAIALVAQSVLG) form the signal peptide. The left arm stretch occupies residues 22 to 46 (TGCGCCCRGCGCGCGGCGCGCCENF). The central domain stretch occupies residues 47–110 (RVCSNSAAPT…GNGCVGITRS (64 aa)). The tract at residues 111 to 131 (CGGCGCGCGGCGCGCGGCGCC) is right arm (Gly-rich tandem repeats).

Belongs to the chorion protein family.

This protein is one of many from the eggshell of the silk moth. The chain is Chorion class high-cysteine HCB protein 12 from Bombyx mori (Silk moth).